Here is a 238-residue protein sequence, read N- to C-terminus: Probable rhamnogalacturonate lyase B (238 aa).

The N-terminal stretch at 1-19 (MRLRTSLGVASACASVASA) is a signal peptide. N-linked (GlcNAc...) asparagine glycans are attached at residues asparagine 27, asparagine 110, and asparagine 143.

This sequence belongs to the polysaccharide lyase 4 family.

The protein resides in the secreted. It carries out the reaction Endotype eliminative cleavage of L-alpha-rhamnopyranosyl-(1-&gt;4)-alpha-D-galactopyranosyluronic acid bonds of rhamnogalacturonan I domains in ramified hairy regions of pectin leaving L-rhamnopyranose at the reducing end and 4-deoxy-4,5-unsaturated D-galactopyranosyluronic acid at the non-reducing end.. Functionally, pectinolytic enzymes consist of four classes of enzymes: pectin lyase, polygalacturonase, pectin methylesterase and rhamnogalacturonase. Degrades the rhamnogalacturonan I (RG-I) backbone of pectin. This chain is Probable rhamnogalacturonate lyase B (rglB), found in Aspergillus oryzae (strain ATCC 42149 / RIB 40) (Yellow koji mold).